Reading from the N-terminus, the 179-residue chain is Stress response regulator gls24 homolog (179 aa).

Positions 147–179 (TSEFTSHQVENVKASVDNGVEKLQDQKAEPRVK) are disordered. Residues 165–179 (GVEKLQDQKAEPRVK) are compositionally biased toward basic and acidic residues.

Belongs to the asp23 family.

This is Stress response regulator gls24 homolog from Streptococcus pyogenes serotype M28 (strain MGAS6180).